A 43-amino-acid polypeptide reads, in one-letter code: Protein PsbN (43 aa).

The chain crosses the membrane as a helical span at residues 5 to 27 (TLVAIFISCSLVSFTGYALYTAF).

Belongs to the PsbN family.

The protein resides in the plastid. Its subcellular location is the chloroplast thylakoid membrane. Functionally, may play a role in photosystem I and II biogenesis. The chain is Protein PsbN from Exsertotheca crispa (Moss).